A 251-amino-acid polypeptide reads, in one-letter code: Sugar fermentation stimulation protein homolog (251 aa).

It belongs to the SfsA family.

The polypeptide is Sugar fermentation stimulation protein homolog (Symbiobacterium thermophilum (strain DSM 24528 / JCM 14929 / IAM 14863 / T)).